The primary structure comprises 140 residues: L-fucose mutarotase (140 aa).

Catalysis depends on histidine 22, which acts as the Proton donor. Substrate is bound by residues aspartate 30, arginine 107, and 129-131; that span reads YGN.

It belongs to the RbsD / FucU family. FucU mutarotase subfamily. In terms of assembly, homodecamer.

The protein resides in the cytoplasm. It carries out the reaction alpha-L-fucose = beta-L-fucose. It participates in carbohydrate metabolism; L-fucose metabolism. Functionally, involved in the anomeric conversion of L-fucose. The sequence is that of L-fucose mutarotase from Citrobacter koseri (strain ATCC BAA-895 / CDC 4225-83 / SGSC4696).